The following is a 379-amino-acid chain: Small ribosomal subunit protein uS2cy (379 aa).

Residues 1–94 (MKLVQFFEIG…MGTSSNRAKS (94 aa)) are N-terminal extension. Residues 83–106 (NQMGTSSNRAKSTDTPAVSTSQNV) form a disordered region.

This sequence belongs to the universal ribosomal protein uS2 family.

The protein resides in the plastid. Its subcellular location is the chloroplast. This is Small ribosomal subunit protein uS2cy (rps2-2) from Tetradesmus obliquus (Green alga).